A 464-amino-acid polypeptide reads, in one-letter code: Glutamate--tRNA ligase (464 aa).

Residues 8–18 (PSPTGYMHLGN) carry the 'HIGH' region motif. 4 residues coordinate Zn(2+): cysteine 96, cysteine 98, cysteine 123, and histidine 125. The 'KMSKS' region signature appears at 240-244 (KLSKR). Lysine 243 provides a ligand contact to ATP.

The protein belongs to the class-I aminoacyl-tRNA synthetase family. Glutamate--tRNA ligase type 1 subfamily. Monomer. Zn(2+) serves as cofactor.

The protein localises to the cytoplasm. It carries out the reaction tRNA(Glu) + L-glutamate + ATP = L-glutamyl-tRNA(Glu) + AMP + diphosphate. In terms of biological role, catalyzes the attachment of glutamate to tRNA(Glu) in a two-step reaction: glutamate is first activated by ATP to form Glu-AMP and then transferred to the acceptor end of tRNA(Glu). The polypeptide is Glutamate--tRNA ligase (Hydrogenobaculum sp. (strain Y04AAS1)).